A 101-amino-acid polypeptide reads, in one-letter code: uncharacterized protein (101 aa).

A run of 2 helical transmembrane segments spans residues 35–55 (LWTM…LIII) and 66–86 (FLFF…TLLF).

It localises to the membrane. This is an uncharacterized protein from Saccharomyces cerevisiae (strain ATCC 204508 / S288c) (Baker's yeast).